We begin with the raw amino-acid sequence, 55 residues long: Trypsin inhibitor ClTI-1 (55 aa).

A Kazal-like domain is found at 1-55; that stretch reads SIPPACDKYSRLPGCPRDYSPVCGTDGKTYPNECVLCLSNSEENKNVQIYKSGMC. Cystine bridges form between Cys-6-Cys-37, Cys-15-Cys-34, and Cys-23-Cys-55.

The protein localises to the secreted. In terms of biological role, inhibits trypsin and plasmin. In Gallus gallus (Chicken), this protein is Trypsin inhibitor ClTI-1.